The following is a 329-amino-acid chain: MVREKVKVSTSTRTRQWKCVESRTDSKRLYYGRFILSPLMKGQADTIGIAMRRALLGELEGTCITRAKSEKIPHEYSTIVGIQESVHEILMNLKEIVLRGNLYGTRNAFICAKGPGYVTAQDIILPPSVEIVDNTQHVASLTEPIDLCIGLQIERNRGYGIKTPKNFHDGSYPIDAVFMPVRNANHSIHCYGNDNEKQEILFLEIWTNGSLTPKEALHEASRNLIDLFIPFLHTEEENLHLENNQHDVTLPFFPFHDRLVKLTKKKKEIALKYIFIDQSELPPRIYNCLKKSNIHTLLDLLNNSREDLMKIEHFRIEDVKQILGILEKK.

Residues 1-235 are alpha N-terminal domain (alpha-NTD); it reads MVREKVKVST…DLFIPFLHTE (235 aa). Residues 269–329 are alpha C-terminal domain (alpha-CTD); the sequence is IALKYIFIDQ…KQILGILEKK (61 aa).

The protein belongs to the RNA polymerase alpha chain family. In terms of assembly, in plastids the minimal PEP RNA polymerase catalytic core is composed of four subunits: alpha, beta, beta', and beta''. When a (nuclear-encoded) sigma factor is associated with the core the holoenzyme is formed, which can initiate transcription.

The protein localises to the plastid. It is found in the chloroplast. The catalysed reaction is RNA(n) + a ribonucleoside 5'-triphosphate = RNA(n+1) + diphosphate. Its function is as follows. DNA-dependent RNA polymerase catalyzes the transcription of DNA into RNA using the four ribonucleoside triphosphates as substrates. The polypeptide is DNA-directed RNA polymerase subunit alpha (Gossypium hirsutum (Upland cotton)).